The primary structure comprises 815 residues: Ataxin-1 (815 aa).

Residues 1–41 (MKSNQERSNECLPPKKREIPATSRSSEEKAPTLPSDNHRVE) are compositionally biased toward basic and acidic residues. Positions 1 to 63 (MKSNQERSNE…GHGGGRHGPA (63 aa)) are disordered. Lys-16 is covalently cross-linked (Glycyl lysine isopeptide (Lys-Gly) (interchain with G-Cter in SUMO)). A compositionally biased stretch (gly residues) spans 49–61 (NPGGRGHGGGRHG). Residues Ser-82 and Ser-88 each carry the phosphoserine modification. Disordered stretches follow at residues 185-270 (GSLS…PVHL), 329-355 (EKSR…VPHP), and 397-424 (VQQA…PGHR). Lys-194 is covalently cross-linked (Glycyl lysine isopeptide (Lys-Gly) (interchain with G-Cter in SUMO)). Residues 197-226 (QQQQQQQQQQQQHQHQQQQQQQQQQQQQQH) are compositionally biased toward low complexity. 2 positions are modified to phosphoserine: Ser-238 and Ser-253. Over residues 243–260 (QQNQYVHISSSPQNTGRT) the composition is skewed to polar residues. A self-association region spans residues 494 to 604 (VGSTDMEASG…TEDFIQSAEI (111 aa)). An interaction with USP7 region spans residues 538 to 815 (LVTQAAYPAM…CIEGRSNVGK (278 aa)). Positions 540 to 766 (TQAAYPAMVQ…FLTKIEPSKP (227 aa)) are RNA-binding. The region spanning 562–693 (SPAAAPPTLP…SLTLKNLKNG (132 aa)) is the AXH domain. Glycyl lysine isopeptide (Lys-Gly) (interchain with G-Cter in SUMO) cross-links involve residues Lys-609, Lys-696, and Lys-745. The tract at residues 762 to 798 (EPSKPAATRKRRWSAPESRKLEKSEDEPPLTLPKPSL) is disordered. Position 775 is a phosphoserine (Ser-775). The short motif at 794–797 (PKPS) is the Nuclear localization signal element.

It belongs to the ATXN1 family. As to quaternary structure, homooligomer. Interacts with CIC. Interacts with ANP32A, PQBP1, UBQLN4, ATXN1L and USP7. Directly interacts with RBPJ; this interaction is disrupted in the presence of Notch intracellular domain. Competes with ATXN1L for RBPJ-binding. Found in a complex with CIC and ATXN1L. Post-translationally, ubiquitinated by UBE3A, leading to its degradation by the proteasome. The presence of expanded poly-Gln repeats in spinocerebellar ataxia 1 (SCA1) patients impairs ubiquitination and degradation, leading to accumulation of ATXN1 in neurons and subsequent toxicity. Phosphorylation at Ser-775 increases the pathogenicity of proteins with an expanded polyglutamine tract. In terms of processing, sumoylation is dependent on nuclear localization and phosphorylation at Ser-775. It is reduced in the presence of an expanded polyglutamine tract. As to expression, widely expressed throughout the body.

It localises to the cytoplasm. Its subcellular location is the nucleus. In terms of biological role, chromatin-binding factor that repress Notch signaling in the absence of Notch intracellular domain by acting as a CBF1 corepressor. Binds to the HEY promoter and might assist, along with NCOR2, RBPJ-mediated repression. Binds RNA in vitro. May be involved in RNA metabolism. In concert with CIC and ATXN1L, involved in brain development. The chain is Ataxin-1 (ATXN1) from Homo sapiens (Human).